Here is a 151-residue protein sequence, read N- to C-terminus: Nucleoside diphosphate kinase (151 aa).

Positions 9, 57, 86, 92, 103, and 113 each coordinate ATP. H116 serves as the catalytic Pros-phosphohistidine intermediate.

This sequence belongs to the NDK family. In terms of assembly, homotetramer. Mg(2+) serves as cofactor.

It localises to the cytoplasm. The catalysed reaction is a 2'-deoxyribonucleoside 5'-diphosphate + ATP = a 2'-deoxyribonucleoside 5'-triphosphate + ADP. It carries out the reaction a ribonucleoside 5'-diphosphate + ATP = a ribonucleoside 5'-triphosphate + ADP. Major role in the synthesis of nucleoside triphosphates other than ATP. The ATP gamma phosphate is transferred to the NDP beta phosphate via a ping-pong mechanism, using a phosphorylated active-site intermediate. The sequence is that of Nucleoside diphosphate kinase from Chloroflexus aurantiacus (strain ATCC 29364 / DSM 637 / Y-400-fl).